A 162-amino-acid chain; its full sequence is Allophycocyanin beta chain (162 aa).

Residue Asn72 is modified to N4-methylasparagine. Residue Cys82 participates in (2R,3E)-phycocyanobilin binding.

Belongs to the phycobiliprotein family. In terms of assembly, heterodimer of an alpha and a beta chain. In terms of processing, contains one covalently linked phycocyanobilin chromophore.

Its subcellular location is the cellular thylakoid membrane. Its function is as follows. Light-harvesting photosynthetic bile pigment-protein from the phycobiliprotein complex. Allophycocyanin has a maximum absorption at approximately 650 nanometers. The polypeptide is Allophycocyanin beta chain (Microchaete diplosiphon (Fremyella diplosiphon)).